We begin with the raw amino-acid sequence, 57 residues long: Large ribosomal subunit protein bL32 (57 aa).

The tract at residues 1–20 is disordered; the sequence is MAVQQRRSSKHRRDKRRSHD. A compositionally biased stretch (basic residues) spans 7-18; the sequence is RSSKHRRDKRRS.

It belongs to the bacterial ribosomal protein bL32 family.

In Mycoplasma genitalium (strain ATCC 33530 / DSM 19775 / NCTC 10195 / G37) (Mycoplasmoides genitalium), this protein is Large ribosomal subunit protein bL32 (rpmF).